We begin with the raw amino-acid sequence, 407 residues long: Nuclear hormone receptor family member nhr-86 (407 aa).

Positions 21–96 (KSTCSICRED…VGMNPAGVQQ (76 aa)) form a DNA-binding region, nuclear receptor. 2 consecutive NR C4-type zinc fingers follow at residues 24–44 (CSIC…CRAC) and 60–79 (CRGN…CRSC). Positions 130–405 (AQSALVEDLH…KDFYDLVNGK (276 aa)) constitute an NR LBD domain. The AF-2 stretch occupies residues 394 to 405 (PPKDFYDLVNGK).

This sequence belongs to the nuclear hormone receptor family. Expressed in intestinal epithelial cells, excretory gland cells and in several head neurons.

It localises to the nucleus. Nuclear receptor which acts as a transcription activator. Binds small molecule ligands, such as phenazine 1-carboxamide (PCN), a pathogen-derived metabolite, leading to modulation of innate immune responses against virulent pathogens. On exposure to exogenous PCN, P.aeruginosa and other xenobiotic immunostimulant such as R24, activates immune response genes, including irg-4, irg-5, mul-1, drd-50, cyp-35C1 and ugt-30, probably via direct interaction with their promoters, and independent of the p38 MAPK pmk-1 pathway. Exhibits higher affinity to R24 than PCN and thus induces stronger immune response. Binds its own promoter thereby autoregulating its expression in the head hypodermis and the pharynx. Possibly plays a role in lipid storage or catabolism. In Caenorhabditis elegans, this protein is Nuclear hormone receptor family member nhr-86 (nhr-86).